We begin with the raw amino-acid sequence, 96 residues long: UPF0298 protein LCA_1075 (96 aa).

Belongs to the UPF0298 family.

It localises to the cytoplasm. This Latilactobacillus sakei subsp. sakei (strain 23K) (Lactobacillus sakei subsp. sakei) protein is UPF0298 protein LCA_1075.